Here is a 110-residue protein sequence, read N- to C-terminus: Large ribosomal subunit protein uL22 (110 aa).

This sequence belongs to the universal ribosomal protein uL22 family. In terms of assembly, part of the 50S ribosomal subunit.

This protein binds specifically to 23S rRNA; its binding is stimulated by other ribosomal proteins, e.g. L4, L17, and L20. It is important during the early stages of 50S assembly. It makes multiple contacts with different domains of the 23S rRNA in the assembled 50S subunit and ribosome. In terms of biological role, the globular domain of the protein is located near the polypeptide exit tunnel on the outside of the subunit, while an extended beta-hairpin is found that lines the wall of the exit tunnel in the center of the 70S ribosome. This is Large ribosomal subunit protein uL22 from Marinomonas sp. (strain MWYL1).